Consider the following 580-residue polypeptide: Tyrosyl-DNA phosphodiesterase 1 (580 aa).

The segment at 65-117 (ATNKEQEAHSSSSKPAVTAPVASGSSSSGSLDTNPSGSSASGPAASQDTSNLA) is disordered. The segment covering 87 to 110 (SGSSSSGSLDTNPSGSSASGPAAS) has biased composition (low complexity). The active-site Nucleophile is H248. Residue K250 participates in substrate binding. The segment at 387 to 390 (SIGS) is interaction with DNA. The Proton donor/acceptor role is filled by H479. A substrate-binding site is contributed by K481.

It belongs to the tyrosyl-DNA phosphodiesterase family. As to expression, expressed in the body and at higher levels in the head. Expressed in the delaminating neuroblasts and a few ganglion mother cells in stage 11-14 embryonic central nervous system. Weak expression is seen in gonads at stage 16. Expressed in the brain; expression is regulated by DIP2.

It localises to the nucleus. The protein localises to the cytoplasm. Its function is as follows. DNA repair enzyme that can remove a variety of covalent adducts from DNA through hydrolysis of a 3'-phosphodiester bond, giving rise to DNA with a free 3' phosphate. Catalyzes the hydrolysis of dead-end complexes between DNA and the topoisomerase I active site tyrosine residue. Hydrolyzes 3'-phosphoglycolates on protruding 3' ends on DNA double-strand breaks due to DNA damage by radiation and free radicals. Acts on blunt-ended double-strand DNA breaks and on single-stranded DNA. May have low 3'exonuclease activity and may be able to remove a single nucleoside from the 3'end of DNA and RNA molecules with 3'hydroxyl groups. Has no exonuclease activity towards DNA or RNA with a 3'phosphate. Required for normal polarization of epidermal cells, correct subcellular location of the Crb complex to the apical lateral membrane, and for normal neuronal development during embryonic development. Contributes to maintenance of epithelial cells in response to topoisomerase-1-mediated and oxidative DNA damage. Required for precise axonal bifurcation in mushroom body neurons. Required for maintenance of normal neuronal function. This chain is Tyrosyl-DNA phosphodiesterase 1, found in Drosophila melanogaster (Fruit fly).